The following is a 361-amino-acid chain: Probable dual-specificity RNA methyltransferase RlmN (361 aa).

The Proton acceptor role is filled by Glu102. A Radical SAM core domain is found at 108–344; that stretch reads SGDRLTVCVS…VRWSKGLGAD (237 aa). Cysteines 115 and 347 form a disulfide. Positions 122, 126, and 129 each coordinate [4Fe-4S] cluster. S-adenosyl-L-methionine-binding positions include 169-170, Ser199, 228-230, and Asn304; these read GE and SLH. The active-site S-methylcysteine intermediate is Cys347.

Belongs to the radical SAM superfamily. RlmN family. The cofactor is [4Fe-4S] cluster.

The protein resides in the cytoplasm. It carries out the reaction adenosine(2503) in 23S rRNA + 2 reduced [2Fe-2S]-[ferredoxin] + 2 S-adenosyl-L-methionine = 2-methyladenosine(2503) in 23S rRNA + 5'-deoxyadenosine + L-methionine + 2 oxidized [2Fe-2S]-[ferredoxin] + S-adenosyl-L-homocysteine. The catalysed reaction is adenosine(37) in tRNA + 2 reduced [2Fe-2S]-[ferredoxin] + 2 S-adenosyl-L-methionine = 2-methyladenosine(37) in tRNA + 5'-deoxyadenosine + L-methionine + 2 oxidized [2Fe-2S]-[ferredoxin] + S-adenosyl-L-homocysteine. In terms of biological role, specifically methylates position 2 of adenine 2503 in 23S rRNA and position 2 of adenine 37 in tRNAs. The chain is Probable dual-specificity RNA methyltransferase RlmN from Synechococcus elongatus (strain ATCC 33912 / PCC 7942 / FACHB-805) (Anacystis nidulans R2).